A 413-amino-acid polypeptide reads, in one-letter code: Tyrosine--tRNA ligase (413 aa).

The 'HIGH' region signature appears at 57–66 (PTAPDIHLGH). The 'KMSKS' region signature appears at 241 to 245 (KMSKS). K244 is an ATP binding site. Residues 351–412 (VWLPRLMVQA…GKRKFARLHT (62 aa)) enclose the S4 RNA-binding domain.

Belongs to the class-I aminoacyl-tRNA synthetase family. TyrS type 2 subfamily. In terms of assembly, homodimer.

It localises to the cytoplasm. It catalyses the reaction tRNA(Tyr) + L-tyrosine + ATP = L-tyrosyl-tRNA(Tyr) + AMP + diphosphate + H(+). In terms of biological role, catalyzes the attachment of tyrosine to tRNA(Tyr) in a two-step reaction: tyrosine is first activated by ATP to form Tyr-AMP and then transferred to the acceptor end of tRNA(Tyr). The protein is Tyrosine--tRNA ligase of Moorella thermoacetica (strain ATCC 39073 / JCM 9320).